The chain runs to 347 residues: Heat-inducible transcription repressor HrcA (347 aa).

It belongs to the HrcA family.

In terms of biological role, negative regulator of class I heat shock genes (grpE-dnaK-dnaJ and groELS operons). Prevents heat-shock induction of these operons. This is Heat-inducible transcription repressor HrcA from Enterococcus faecalis (strain ATCC 700802 / V583).